Consider the following 131-residue polypeptide: Transcription antitermination protein NusB (131 aa).

It belongs to the NusB family.

Functionally, involved in transcription antitermination. Required for transcription of ribosomal RNA (rRNA) genes. Binds specifically to the boxA antiterminator sequence of the ribosomal RNA (rrn) operons. The polypeptide is Transcription antitermination protein NusB (Campylobacter concisus (strain 13826)).